The primary structure comprises 371 residues: Putative RING finger protein ORF117 (371 aa).

The RING-type zinc finger occupies 72 to 108 (CCICFRKDVIYKEVPCGHYICVECYKEPIRNVCPECN). A compositionally biased stretch (acidic residues) spans 178-192 (EEEMNESEAEEEEPV). Positions 178–218 (EEEMNESEAEEEEPVPEIAQFEALNTPPPPPTNRRPKIRRP) are disordered.

This chain is Putative RING finger protein ORF117, found in Magallana gigas (Pacific oyster).